The following is a 179-amino-acid chain: Ribosome maturation factor RimP (179 aa).

The protein belongs to the RimP family.

Its subcellular location is the cytoplasm. Required for maturation of 30S ribosomal subunits. The chain is Ribosome maturation factor RimP from Chlorobium chlorochromatii (strain CaD3).